A 775-amino-acid polypeptide reads, in one-letter code: Probable ubiquitin carboxyl-terminal hydrolase creB (775 aa).

The segment at M1–P45 is disordered. The segment covering L36–P45 has biased composition (basic and acidic residues). One can recognise a USP domain in the interval Y55–T468. The active-site Nucleophile is the C64. Disordered stretches follow at residues E113–E146 and A238–N269. Residues S256–N269 show a composition bias toward polar residues. Catalysis depends on H419, which acts as the Proton acceptor. The tract at residues L496–S775 is disordered. Low complexity-rich tracts occupy residues E546–S566 and E576–P585. A coiled-coil region spans residues K586–L653. The span at A589–Q662 shows a compositional bias: basic and acidic residues. Residues R668–R679 are compositionally biased toward basic residues. Low complexity predominate over residues S705–N725. Residues T739 to G757 are compositionally biased toward basic and acidic residues. Residues H758–S775 show a composition bias toward basic residues.

It belongs to the peptidase C19 family. In terms of assembly, interacts with creA, creC and qutD.

The catalysed reaction is Thiol-dependent hydrolysis of ester, thioester, amide, peptide and isopeptide bonds formed by the C-terminal Gly of ubiquitin (a 76-residue protein attached to proteins as an intracellular targeting signal).. In terms of biological role, ubiquitin thioesterase component of the regulatory network controlling carbon source utilization through ubiquitination and deubiquitination involving creA, creB, creC, creD and acrB. Deubiquitinates the creA catabolic repressor and the quinate permease qutD. Also plays a role in response to carbon starvation and the control of extracellular proteases activity. The chain is Probable ubiquitin carboxyl-terminal hydrolase creB (creB) from Aspergillus fumigatus (strain ATCC MYA-4609 / CBS 101355 / FGSC A1100 / Af293) (Neosartorya fumigata).